A 199-amino-acid polypeptide reads, in one-letter code: 7-methyl-GTP pyrophosphatase (199 aa).

Asp76 serves as the catalytic Proton acceptor.

The protein belongs to the Maf family. YceF subfamily. A divalent metal cation serves as cofactor.

The protein resides in the cytoplasm. It catalyses the reaction N(7)-methyl-GTP + H2O = N(7)-methyl-GMP + diphosphate + H(+). Its function is as follows. Nucleoside triphosphate pyrophosphatase that hydrolyzes 7-methyl-GTP (m(7)GTP). May have a dual role in cell division arrest and in preventing the incorporation of modified nucleotides into cellular nucleic acids. This chain is 7-methyl-GTP pyrophosphatase (maf-2), found in Brucella suis biovar 1 (strain 1330).